A 313-amino-acid polypeptide reads, in one-letter code: tRNA dimethylallyltransferase (313 aa).

8-15 (GPTGTGKS) provides a ligand contact to ATP. 10–15 (TGTGKS) contacts substrate.

Belongs to the IPP transferase family. As to quaternary structure, monomer. It depends on Mg(2+) as a cofactor.

It carries out the reaction adenosine(37) in tRNA + dimethylallyl diphosphate = N(6)-dimethylallyladenosine(37) in tRNA + diphosphate. Catalyzes the transfer of a dimethylallyl group onto the adenine at position 37 in tRNAs that read codons beginning with uridine, leading to the formation of N6-(dimethylallyl)adenosine (i(6)A). The chain is tRNA dimethylallyltransferase from Mycolicibacterium gilvum (strain PYR-GCK) (Mycobacterium gilvum (strain PYR-GCK)).